Here is a 416-residue protein sequence, read N- to C-terminus: UDP-N-acetylglucosamine 1-carboxyvinyltransferase (416 aa).

A phosphoenolpyruvate-binding site is contributed by Lys22–Asn23. Arg91 provides a ligand contact to UDP-N-acetyl-alpha-D-glucosamine. Cys115 serves as the catalytic Proton donor. Residue Cys115 is modified to 2-(S-cysteinyl)pyruvic acid O-phosphothioketal. Residues Arg120–Leu124, Asp305, and Ile327 each bind UDP-N-acetyl-alpha-D-glucosamine.

Belongs to the EPSP synthase family. MurA subfamily.

The protein resides in the cytoplasm. It catalyses the reaction phosphoenolpyruvate + UDP-N-acetyl-alpha-D-glucosamine = UDP-N-acetyl-3-O-(1-carboxyvinyl)-alpha-D-glucosamine + phosphate. Its pathway is cell wall biogenesis; peptidoglycan biosynthesis. In terms of biological role, cell wall formation. Adds enolpyruvyl to UDP-N-acetylglucosamine. This Buchnera aphidicola subsp. Acyrthosiphon pisum (strain Tuc7) protein is UDP-N-acetylglucosamine 1-carboxyvinyltransferase.